A 126-amino-acid polypeptide reads, in one-letter code: Protein ApaG (126 aa).

The region spanning 2 to 126 (SALDDSIRVE…FRLALPGLLH (125 aa)) is the ApaG domain.

In Shewanella sp. (strain MR-7), this protein is Protein ApaG.